The primary structure comprises 348 residues: 3-isopropylmalate dehydrogenase (348 aa).

An NAD(+)-binding site is contributed by 76–87; sequence GPKWTDPNNRPE. Substrate-binding residues include Arg-94, Arg-104, Arg-132, and Asp-217. Mg(2+) contacts are provided by Asp-217, Asp-241, and Asp-245. Residue 275-287 coordinates NAD(+); sequence GSAPDIAGKNVAN.

Belongs to the isocitrate and isopropylmalate dehydrogenases family. LeuB type 1 subfamily. In terms of assembly, homodimer. Requires Mg(2+) as cofactor. Mn(2+) is required as a cofactor.

Its subcellular location is the cytoplasm. The catalysed reaction is (2R,3S)-3-isopropylmalate + NAD(+) = 4-methyl-2-oxopentanoate + CO2 + NADH. Its pathway is amino-acid biosynthesis; L-leucine biosynthesis; L-leucine from 3-methyl-2-oxobutanoate: step 3/4. In terms of biological role, catalyzes the oxidation of 3-carboxy-2-hydroxy-4-methylpentanoate (3-isopropylmalate) to 3-carboxy-4-methyl-2-oxopentanoate. The product decarboxylates to 4-methyl-2 oxopentanoate. This Staphylococcus aureus (strain bovine RF122 / ET3-1) protein is 3-isopropylmalate dehydrogenase.